The chain runs to 132 residues: Small ribosomal subunit protein uS8 (132 aa).

This sequence belongs to the universal ribosomal protein uS8 family. In terms of assembly, part of the 30S ribosomal subunit. Contacts proteins S5 and S12.

In terms of biological role, one of the primary rRNA binding proteins, it binds directly to 16S rRNA central domain where it helps coordinate assembly of the platform of the 30S subunit. The chain is Small ribosomal subunit protein uS8 from Lactobacillus acidophilus (strain ATCC 700396 / NCK56 / N2 / NCFM).